A 320-amino-acid polypeptide reads, in one-letter code: Ribonuclease Z (320 aa).

Residues His63, His65, Asp67, His68, His141, Asp212, and His270 each contribute to the Zn(2+) site. Catalysis depends on Asp67, which acts as the Proton acceptor.

The protein belongs to the RNase Z family. Homodimer. The cofactor is Zn(2+).

The catalysed reaction is Endonucleolytic cleavage of RNA, removing extra 3' nucleotides from tRNA precursor, generating 3' termini of tRNAs. A 3'-hydroxy group is left at the tRNA terminus and a 5'-phosphoryl group is left at the trailer molecule.. Its function is as follows. Zinc phosphodiesterase, which displays some tRNA 3'-processing endonuclease activity. Probably involved in tRNA maturation, by removing a 3'-trailer from precursor tRNA. The chain is Ribonuclease Z from Lacticaseibacillus casei (strain BL23) (Lactobacillus casei).